The chain runs to 310 residues: Carbamate kinase (310 aa).

It belongs to the carbamate kinase family.

The protein resides in the cytoplasm. It catalyses the reaction hydrogencarbonate + NH4(+) + ATP = carbamoyl phosphate + ADP + H2O + H(+). It participates in metabolic intermediate metabolism; carbamoyl phosphate degradation; CO(2) and NH(3) from carbamoyl phosphate: step 1/1. The chain is Carbamate kinase (arcC) from Staphylococcus epidermidis (strain ATCC 35984 / DSM 28319 / BCRC 17069 / CCUG 31568 / BM 3577 / RP62A).